A 214-amino-acid polypeptide reads, in one-letter code: Holliday junction branch migration complex subunit RuvA (214 aa).

The segment at 1-64 (MITRIRGEML…EDAMTLYGFT (64 aa)) is domain I. The segment at 65–143 (SGEQLAVFEL…DITSKDAYQD (79 aa)) is domain II. Positions 144–160 (ISASEKLDNTGEKLGIS) are flexible linker. Positions 161-214 (TRHKHLDELKAALSSLGYTNREIEKTVDAIQGQITEGQDMEELLRLALQKLNTK) are domain III.

It belongs to the RuvA family. Homotetramer. Forms an RuvA(8)-RuvB(12)-Holliday junction (HJ) complex. HJ DNA is sandwiched between 2 RuvA tetramers; dsDNA enters through RuvA and exits via RuvB. An RuvB hexamer assembles on each DNA strand where it exits the tetramer. Each RuvB hexamer is contacted by two RuvA subunits (via domain III) on 2 adjacent RuvB subunits; this complex drives branch migration. In the full resolvosome a probable DNA-RuvA(4)-RuvB(12)-RuvC(2) complex forms which resolves the HJ.

Its subcellular location is the cytoplasm. Its function is as follows. The RuvA-RuvB-RuvC complex processes Holliday junction (HJ) DNA during genetic recombination and DNA repair, while the RuvA-RuvB complex plays an important role in the rescue of blocked DNA replication forks via replication fork reversal (RFR). RuvA specifically binds to HJ cruciform DNA, conferring on it an open structure. The RuvB hexamer acts as an ATP-dependent pump, pulling dsDNA into and through the RuvAB complex. HJ branch migration allows RuvC to scan DNA until it finds its consensus sequence, where it cleaves and resolves the cruciform DNA. This is Holliday junction branch migration complex subunit RuvA from Natranaerobius thermophilus (strain ATCC BAA-1301 / DSM 18059 / JW/NM-WN-LF).